A 306-amino-acid chain; its full sequence is Acetyl-coenzyme A carboxylase carboxyl transferase subunit beta (306 aa).

Residues 25–294 (VWTKCDSCGQ…PQDPLPHEPR (270 aa)) enclose the CoA carboxyltransferase N-terminal domain. C29, C32, C48, and C51 together coordinate Zn(2+). Residues 29 to 51 (CDSCGQVLYRAELERNLEVCPKC) form a C4-type zinc finger. Positions 281 to 306 (NRPQPQDPLPHEPRPDAVPEDHQDEV) are disordered. Basic and acidic residues predominate over residues 289 to 306 (LPHEPRPDAVPEDHQDEV).

It belongs to the AccD/PCCB family. In terms of assembly, acetyl-CoA carboxylase is a heterohexamer composed of biotin carboxyl carrier protein (AccB), biotin carboxylase (AccC) and two subunits each of ACCase subunit alpha (AccA) and ACCase subunit beta (AccD). The cofactor is Zn(2+).

Its subcellular location is the cytoplasm. It catalyses the reaction N(6)-carboxybiotinyl-L-lysyl-[protein] + acetyl-CoA = N(6)-biotinyl-L-lysyl-[protein] + malonyl-CoA. It functions in the pathway lipid metabolism; malonyl-CoA biosynthesis; malonyl-CoA from acetyl-CoA: step 1/1. Component of the acetyl coenzyme A carboxylase (ACC) complex. Biotin carboxylase (BC) catalyzes the carboxylation of biotin on its carrier protein (BCCP) and then the CO(2) group is transferred by the transcarboxylase to acetyl-CoA to form malonyl-CoA. This is Acetyl-coenzyme A carboxylase carboxyl transferase subunit beta from Sodalis glossinidius (strain morsitans).